The primary structure comprises 404 residues: Probable tRNA sulfurtransferase (404 aa).

The 106-residue stretch at 61 to 166 (QTLVTGLPKI…HDATYMMAQV (106 aa)) folds into the THUMP domain. Residues 184-185 (ML), 209-210 (HF), Arg-266, Gly-288, and Gln-297 contribute to the ATP site.

Belongs to the ThiI family.

The protein localises to the cytoplasm. The enzyme catalyses [ThiI sulfur-carrier protein]-S-sulfanyl-L-cysteine + a uridine in tRNA + 2 reduced [2Fe-2S]-[ferredoxin] + ATP + H(+) = [ThiI sulfur-carrier protein]-L-cysteine + a 4-thiouridine in tRNA + 2 oxidized [2Fe-2S]-[ferredoxin] + AMP + diphosphate. It catalyses the reaction [ThiS sulfur-carrier protein]-C-terminal Gly-Gly-AMP + S-sulfanyl-L-cysteinyl-[cysteine desulfurase] + AH2 = [ThiS sulfur-carrier protein]-C-terminal-Gly-aminoethanethioate + L-cysteinyl-[cysteine desulfurase] + A + AMP + 2 H(+). Its pathway is cofactor biosynthesis; thiamine diphosphate biosynthesis. Functionally, catalyzes the ATP-dependent transfer of a sulfur to tRNA to produce 4-thiouridine in position 8 of tRNAs, which functions as a near-UV photosensor. Also catalyzes the transfer of sulfur to the sulfur carrier protein ThiS, forming ThiS-thiocarboxylate. This is a step in the synthesis of thiazole, in the thiamine biosynthesis pathway. The sulfur is donated as persulfide by IscS. This chain is Probable tRNA sulfurtransferase, found in Lysinibacillus sphaericus (strain C3-41).